Reading from the N-terminus, the 276-residue chain is Rhomboid protease GlpG (276 aa).

Transmembrane regions (helical) follow at residues 94 to 114, 142 to 162, 169 to 189, 192 to 212, 229 to 249, and 250 to 270; these read GPVTWIVMLACVVVYIAMSLI, IFMHFSLMHILFNLLWWWYLG, LGSGKLIVITVISALLSGYVQ, FSGPWFGGLSGVVYALMGYVW, LIIFALLWIVASWFDWFGMSM, and ANGAHIAGLIVGLAMAFVDTL. The active-site Nucleophile is the S201. The active site involves H254.

The protein belongs to the peptidase S54 family.

It is found in the cell inner membrane. The catalysed reaction is Cleaves type-1 transmembrane domains using a catalytic dyad composed of serine and histidine that are contributed by different transmembrane domains.. Functionally, rhomboid-type serine protease that catalyzes intramembrane proteolysis. This Salmonella paratyphi A (strain ATCC 9150 / SARB42) protein is Rhomboid protease GlpG.